The primary structure comprises 238 residues: Pyridoxine 5'-phosphate synthase (238 aa).

3-amino-2-oxopropyl phosphate is bound at residue asparagine 6. 8-9 (DH) lines the 1-deoxy-D-xylulose 5-phosphate pocket. Arginine 17 is a 3-amino-2-oxopropyl phosphate binding site. Histidine 42 acts as the Proton acceptor in catalysis. 2 residues coordinate 1-deoxy-D-xylulose 5-phosphate: arginine 44 and histidine 49. The active-site Proton acceptor is glutamate 69. 1-deoxy-D-xylulose 5-phosphate is bound at residue threonine 99. The Proton donor role is filled by histidine 190. Residues glycine 191 and 212–213 (GH) each bind 3-amino-2-oxopropyl phosphate.

The protein belongs to the PNP synthase family. In terms of assembly, homooctamer; tetramer of dimers.

It is found in the cytoplasm. It carries out the reaction 3-amino-2-oxopropyl phosphate + 1-deoxy-D-xylulose 5-phosphate = pyridoxine 5'-phosphate + phosphate + 2 H2O + H(+). It functions in the pathway cofactor biosynthesis; pyridoxine 5'-phosphate biosynthesis; pyridoxine 5'-phosphate from D-erythrose 4-phosphate: step 5/5. Functionally, catalyzes the complicated ring closure reaction between the two acyclic compounds 1-deoxy-D-xylulose-5-phosphate (DXP) and 3-amino-2-oxopropyl phosphate (1-amino-acetone-3-phosphate or AAP) to form pyridoxine 5'-phosphate (PNP) and inorganic phosphate. The protein is Pyridoxine 5'-phosphate synthase of Chlorobium phaeobacteroides (strain BS1).